The chain runs to 131 residues: Peptidyl-prolyl cis-trans isomerase NIMA-interacting 4 (131 aa).

Residues M1–D25 are necessary for nuclear localization and DNA-binding. Residues M1 to K39 are disordered. Positions M1–R41 are necessary for association with the pre-rRNP complexes. Over residues S7–A18 the composition is skewed to gly residues. S19 is subject to Phosphoserine; by CK2. Positions G35–G129 constitute a PpiC domain.

Belongs to the PpiC/parvulin rotamase family. PIN4 subfamily. Found in pre-ribosomal ribonucleoprotein (pre-rRNP) complexes. In terms of processing, phosphorylated. Phosphorylation occurs both in the nucleus and the cytoplasm. Phosphorylation at Ser-19 does not affect its PPIase activity but is required for nuclear localization, and the dephosphorylation is a prerequisite for the binding to DNA. The unphosphorylated form associates with the pre-rRNP complexes in the nucleus.

It is found in the nucleus. It localises to the nucleolus. Its subcellular location is the cytoplasm. The protein localises to the cytoskeleton. The protein resides in the spindle. The enzyme catalyses [protein]-peptidylproline (omega=180) = [protein]-peptidylproline (omega=0). Involved as a ribosomal RNA processing factor in ribosome biogenesis. Binds to tightly bent AT-rich stretches of double-stranded DNA. This chain is Peptidyl-prolyl cis-trans isomerase NIMA-interacting 4 (Pin4), found in Mus musculus (Mouse).